The primary structure comprises 183 residues: Ribosome-recycling factor (183 aa).

It belongs to the RRF family.

It is found in the cytoplasm. In terms of biological role, responsible for the release of ribosomes from messenger RNA at the termination of protein biosynthesis. May increase the efficiency of translation by recycling ribosomes from one round of translation to another. The sequence is that of Ribosome-recycling factor from Mycoplasma genitalium (strain ATCC 33530 / DSM 19775 / NCTC 10195 / G37) (Mycoplasmoides genitalium).